A 3080-amino-acid chain; its full sequence is Adhesion G-protein coupled receptor G4 (3080 aa).

The first 27 residues, 1 to 27 (MKEHIIYQKLYGLILMSSFIFLSDTLS), serve as a signal peptide directing secretion. At 28 to 2740 (LKGKKLDFFG…SRSTVDSVNE (2713 aa)) the chain is on the extracellular side. The Pentraxin (PTX) domain occupies 29–228 (KGKKLDFFGR…IPTVDRTLRC (200 aa)). 2 cysteine pairs are disulfide-bonded: Cys58–Cys123 and Cys200–Cys228. Asp202 is a binding site for Mg(2+). N-linked (GlcNAc...) asparagine glycans are attached at residues Asn233, Asn487, Asn836, and Asn899. Polar residues predominate over residues 946–959 (SEGISAGSPTSGST). The interval 946 to 965 (SEGISAGSPTSGSTHIFGEP) is disordered. N-linked (GlcNAc...) asparagine glycosylation occurs at Asn1020. Residues 1274–1348 (VTEMSPSKNS…ITPTLTSSNT (75 aa)) are disordered. Polar residues-rich tracts occupy residues 1277-1296 (MSPSKNSFISYSRGTPSLEM), 1305-1315 (TKISSHQTHSP), and 1324-1348 (SDGNLASSPTSGSTQITPTLTSSNT). The N-linked (GlcNAc...) asparagine glycan is linked to Asn1519. Residues 2109-2139 (SRTTITANPRTVSHPSSFSRKTMSPSTTDHT) are compositionally biased toward polar residues. Positions 2109 to 2141 (SRTTITANPRTVSHPSSFSRKTMSPSTTDHTLS) are disordered. N-linked (GlcNAc...) asparagine glycosylation is found at Asn2361 and Asn2640. A GAIN-B domain is found at 2578–2734 (MAFSIHSYEE…GVLMDLSRST (157 aa)). 2 disulfides stabilise this stretch: Cys2685/Cys2716 and Cys2704/Cys2718. The GPS stretch occupies residues 2685–2734 (CAFWDFENNNGLGGWNSSGCKVKETNVNYTICQCDHLTHFGVLMDLSRST). The tract at residues 2723 to 2734 (HFGVLMDLSRST) is stachel. The chain crosses the membrane as a helical span at residues 2741–2766 (QILALITYTGCGISSIFLGVAVVTYI). The Cytoplasmic portion of the chain corresponds to 2767 to 2777 (AFHKLRKDYPA). The helical transmembrane segment at 2778–2800 (KILINLCTALLMLNLVFLINSWL) threads the bilayer. Topologically, residues 2801–2806 (SSFQKV) are extracellular. The helical transmembrane segment at 2807–2835 (GVCITAAVALHYFLLVSFTWMGLEAVHMY) threads the bilayer. Cysteines 2809 and 2886 form a disulfide. Over 2836-2849 (LALVKVFNIYIPNY) the chain is Cytoplasmic. The helical transmembrane segment at 2850-2870 (ILKFCLVGWGIPAIMVAITVS) threads the bilayer. Topologically, residues 2871–2892 (VKKDLYGTLSPTTPFCWIKDDS) are extracellular. The chain crosses the membrane as a helical span at residues 2893 to 2918 (IFYISVVAYFCLIFLMNLSMFCTVLV). Topologically, residues 2919–2937 (QLNSVKSQIQKTRRKMILH) are cytoplasmic. The helical transmembrane segment at 2938–2961 (DLKGTMSLTFLLGLTWGFAFFAWG) threads the bilayer. The Extracellular segment spans residues 2962–2965 (PMRN). The chain crosses the membrane as a helical span at residues 2966 to 2989 (FFLYLFAIFNTLQGFFIFVFHCVM). Residues 2990–3080 (KESVREQWQI…FDKDPYCSSP (91 aa)) are Cytoplasmic-facing. Polar residues predominate over residues 3051–3065 (FKSLGSAQGTPSEIS). The segment at 3051 to 3080 (FKSLGSAQGTPSEISFPNDDFDKDPYCSSP) is disordered.

It belongs to the G-protein coupled receptor 2 family. Adhesion G-protein coupled receptor (ADGR) subfamily. Homodimer; homodimerizes via its Pentraxin domain in a calcium-independent manner. Heterodimer of 2 chains generated by proteolytic processing; the large extracellular N-terminal fragment and the membrane-bound C-terminal fragment predominantly remain associated and non-covalently linked. Autoproteolytically processed at the GPS region of the GAIN-B domain; this cleavage modulates receptor activity. In terms of processing, N-glycosylated. As to expression, detected in fetal retina. Highly expressed in normal enterochromaffin cells and in neuroendocrine carcinoma. Detected in normal liver; highly expressed in primary liver carcinoma.

The protein localises to the membrane. Forms a heterodimer of 2 chains generated by proteolytic processing that remain associated through non-covalent interactions mediated by the GAIN-B domain. In the inactivated receptor, the Stachel sequence (also named stalk) is embedded in the GAIN-B domain, where it adopts a beta-strand conformation. On activation, the Stachel moves into the 7 transmembrane region and adopts a twisted hook-shaped configuration that forms contacts within the receptor, leading to coupling of a G-alpha protein, which activates signaling. The cleaved GAIN-B and N-terminal domains can then dissociate from the rest of the receptor. Functionally, orphan adhesion G-protein coupled receptor (aGPCR). Ligand binding causes a conformation change that triggers signaling via guanine nucleotide-binding proteins (G proteins) and modulates the activity of downstream effectors, such as adenylate cyclase. ADGRG4 is coupled to G(s) G proteins and mediates activation of adenylate cyclase activity. May be act as sensor of mechanical forces. The sequence is that of Adhesion G-protein coupled receptor G4 from Homo sapiens (Human).